Consider the following 31-residue polypeptide: Cytochrome b6-f complex subunit 6 (31 aa).

Residues 3-23 form a helical membrane-spanning segment; the sequence is ILINYFLLVGFCFALASGLFL.

Belongs to the PetL family. In terms of assembly, the 4 large subunits of the cytochrome b6-f complex are cytochrome b6, subunit IV (17 kDa polypeptide, PetD), cytochrome f and the Rieske protein, while the 4 small subunits are PetG, PetL, PetM and PetN. The complex functions as a dimer.

It is found in the plastid. Its subcellular location is the chloroplast thylakoid membrane. In terms of biological role, component of the cytochrome b6-f complex, which mediates electron transfer between photosystem II (PSII) and photosystem I (PSI), cyclic electron flow around PSI, and state transitions. PetL is important for photoautotrophic growth as well as for electron transfer efficiency and stability of the cytochrome b6-f complex. The protein is Cytochrome b6-f complex subunit 6 of Thalassiosira pseudonana (Marine diatom).